A 377-amino-acid polypeptide reads, in one-letter code: Glutamate 5-kinase (377 aa).

ATP is bound at residue lysine 20. Substrate is bound by residues serine 60, aspartate 147, and asparagine 159. 179-180 (TD) is an ATP binding site. Residues 285 to 363 (AGRLVIDDGA…DKVYQVLGEA (79 aa)) enclose the PUA domain.

The protein belongs to the glutamate 5-kinase family.

The protein localises to the cytoplasm. It catalyses the reaction L-glutamate + ATP = L-glutamyl 5-phosphate + ADP. The protein operates within amino-acid biosynthesis; L-proline biosynthesis; L-glutamate 5-semialdehyde from L-glutamate: step 1/2. In terms of biological role, catalyzes the transfer of a phosphate group to glutamate to form L-glutamate 5-phosphate. The polypeptide is Glutamate 5-kinase (Acinetobacter baumannii (strain AB307-0294)).